The primary structure comprises 282 residues: Undecaprenyl-diphosphatase (282 aa).

5 helical membrane-spanning segments follow: residues 90-110, 121-141, 194-214, 228-248, and 256-276; these read YRLG…GLFF, LWVV…AEYV, FGFL…LPDA, QLLV…AWLL, and MYWF…LLAT.

Belongs to the UppP family.

The protein localises to the cell membrane. The enzyme catalyses di-trans,octa-cis-undecaprenyl diphosphate + H2O = di-trans,octa-cis-undecaprenyl phosphate + phosphate + H(+). Functionally, catalyzes the dephosphorylation of undecaprenyl diphosphate (UPP). Confers resistance to bacitracin. This chain is Undecaprenyl-diphosphatase, found in Mycobacterium tuberculosis (strain ATCC 25618 / H37Rv).